The sequence spans 500 residues: MVEKSVHEINKKIEDGSVNVVTAEEMVGIVENLGVEGAAREVDVVTTGTFGAMCSSGLMLNLGHSEPPIKIQKLWFNNVEAYSGLAAVDAYLGAAQISDTRGIQYGGAHVIEDLLRGKELDVHATSYGTDCYPRKVLDTRITLDDLNEAVLLNPRNAYQKYAAATNSSKRILNTYMGELLPNFGNVTYSGAGVLSPLSNDPDYETIGMGTRIFMGGAQGYIIGNGTQHSPSSSFGTLMLKGNLKEMSSDYLRAASFAGYGTTLYMGIGIPIPILNEKIAASTAVRDEDIFTDILDYAVGSRDKPVIKQVNYAELRSGSIELEGKNTPTSSLSSFKNARKIANELKEWVKHGKFFVSMPVEKLSREGSAKSMKQTQAVPLVKDVMADFIVTIKKNQTVQDAAKKIWENSFNHLAVVSDTGELVGILTAWDISKAVAENIFDSVESVMTKKVLTCAPNEPVDLAARRLDRYGVSAMPVIDTQRKVLGIITSDNISKLLARRY.

Residue Cys-131 is the Cysteine persulfide intermediate of the active site. 2 consecutive CBS domains span residues 384–441 and 446–500; these read MADF…IFDS and MTKK…ARRY.

The protein belongs to the L-aspartate semialdehyde sulfurtransferase family. Forms homodimers. May form a complex with MA_1822.

The catalysed reaction is L-aspartate 4-semialdehyde + reduced 2[4Fe-4S]-[ferredoxin] + hydrogen sulfide + 3 H(+) = oxidized 2[4Fe-4S]-[ferredoxin] + L-homocysteine + H2O. Its pathway is amino-acid biosynthesis. Functionally, required for O-acetylhomoserine sulfhydrylase (OAHS)-independent homocysteine (Hcy) biosynthesis. Together with MA_1822, catalyzes the condensation of sulfide with aspartate semialdehyde to generate homocysteine. Likely functions through persulfide intermediate. In Methanosarcina acetivorans (strain ATCC 35395 / DSM 2834 / JCM 12185 / C2A), this protein is L-aspartate semialdehyde sulfurtransferase.